Reading from the N-terminus, the 609-residue chain is Zinc metalloproteinase/disintegrin-like HR1a (609 aa).

Residues 1-20 (MIQVLLVTICLAVFPYQGSS) form the signal peptide. The propeptide occupies 21-190 (IILGSGNVND…KKASKLVVTA (170 aa)). In terms of domain architecture, Peptidase M12B spans 200 to 396 (RFIELVIVAD…DEPQCILNEP (197 aa)). Ca(2+)-binding residues include Glu203 and Asp287. Asn298 is a glycosylation site (N-linked (GlcNAc...) asparagine). Disulfide bonds link Cys311/Cys391, Cys351/Cys375, and Cys353/Cys358. Residue His336 participates in Zn(2+) binding. Residue Glu337 is part of the active site. 2 residues coordinate Zn(2+): His340 and His346. The N-linked (GlcNAc...) asparagine glycan is linked to Asn350. An N-linked (GlcNAc...) asparagine glycan is attached at Asn374. Residues Cys391 and Asn394 each coordinate Ca(2+). The propeptide occupies 397–400 (LRTD). A Disintegrin domain is found at 404 to 490 (PPVCGNELLE…DCPTDRFHRN (87 aa)). Residues Val406, Asn409, Leu411, Glu413, Glu416, and Asp419 each coordinate Ca(2+). Disulfide bonds link Cys407–Cys426, Cys407–Cys436, Cys418–Cys431, Cys418–Cys436, Cys420–Cys426, Cys430–Cys453, Cys444–Cys450, Cys449–Cys475, Cys462–Cys482, Cys469–Cys494, Cys469–Cys501, Cys494–Cys506, Cys501–Cys506, Cys513–Cys528, Cys513–Cys563, Cys528–Cys571, Cys541–Cys551, Cys551–Cys558, Cys558–Cys597, Cys563–Cys571, Cys591–Cys602, and Cys597–Cys602. Positions 468-470 (ECD) match the D/ECD-tripeptide motif. Ca(2+)-binding residues include Asp470, Glu473, and Asp485. Residue Asn520 is glycosylated (N-linked (GlcNAc...) asparagine).

The protein belongs to the venom metalloproteinase (M12B) family. P-III subfamily. P-IIIb sub-subfamily. Monomer. Requires Zn(2+) as cofactor. In terms of tissue distribution, expressed by the venom gland.

It localises to the secreted. In terms of biological role, zinc protease that induces hemorrhage and has proteolytic activity. Has preference for Ala, His, Pro, Met, and Tyr at the P1 position, in descending order (in vitro). Predominantly prefers Val and Asp at the P3 and P2 positions, respectively. Its function is as follows. Inhibits platelet aggregation induced by ADP, thrombin, platelet-activating factor and collagen. Acts by inhibiting fibrinogen interaction with platelet receptors alpha-IIb/beta-3 (ITGA2B/ITGB3). The chain is Zinc metalloproteinase/disintegrin-like HR1a from Protobothrops flavoviridis (Habu).